We begin with the raw amino-acid sequence, 170 residues long: Cathelicidin antimicrobial peptide (170 aa).

The signal sequence occupies residues 1–30 (MKTQRDGHSLGRWSLVLLLLGLVMPLAIVA). A propeptide spans 31 to 131 (QVLSYKEAVL…DISCDKDNKR (101 aa)) (cathelin-like domain (CLD)). Disulfide bonds link C86–C97 and C108–C125. The segment at 150–162 (FKRIVQRIKDFLR) is active core.

This sequence belongs to the cathelicidin family. As to quaternary structure, monomer, homodimer or homotrimer (in vitro). Oligomerizes as tetra- or hexamer in solution (in vitro). In terms of processing, proteolytically cleaved by proteinase PRTN3 into antibacterial peptide LL-37. Proteolytically cleaved by cathepsin CTSG and neutrophil elastase ELANE. Resistant to proteolytic degradation in solution, and when bound to both zwitterionic (mimicking mammalian membranes) and negatively charged membranes (mimicking bacterial membranes). Post-translationally, after secretion onto the skin surface, the CAMP gene product is processed by a serine protease-dependent mechanism into multiple novel antimicrobial peptides distinct from and shorter than cathelicidin LL-37. These peptides show enhanced antimicrobial action, acquiring the ability to kill skin pathogens such as S.aureus, E.coli and C.albicans. These peptides have lost the ability to stimulate CXCL8/IL8 release from keratinocytes. The peptides act synergistically, killing bacteria at lower concentrations when present together, and maintain activity at increased salt condition.

It is found in the secreted. Its subcellular location is the vesicle. Its function is as follows. Antimicrobial protein that is an integral component of the innate immune system. Binds to bacterial lipopolysaccharides (LPS). Acts via neutrophil N-formyl peptide receptors to enhance the release of CXCL2. Postsecretory processing generates multiple cathelicidin antimicrobial peptides with various lengths which act as a topical antimicrobial defense in sweat on skin. The unprocessed precursor form, cathelicidin antimicrobial peptide, inhibits the growth of Gram-negative E.coli and E.aerogenes with efficiencies comparable to that of the mature peptide LL-37 (in vitro). In terms of biological role, antimicrobial peptide that is an integral component of the innate immune system. Binds to bacterial lipopolysaccharides (LPS). Causes membrane permeabilization by forming transmembrane pores (in vitro). Causes lysis of E.coli. Exhibits antimicrobial activity against Gram-negative bacteria such as P.aeruginosa, S.typhimurium, E.aerogenes, E.coli and P.syringae, Gram-positive bacteria such as L.monocytogenes, S.epidermidis, S.pyogenes and S.aureus, as well as vancomycin-resistant enterococci (in vitro). Exhibits antimicrobial activity against methicillin-resistant S.aureus, P.mirabilis, and C.albicans in low-salt media, but not in media containing 100 mM NaCl (in vitro). Forms chiral supramolecular assemblies with quinolone signal (PQS) molecules of P.aeruginosa, which may lead to interference of bacterial quorum signaling and perturbance of bacterial biofilm formation. May form supramolecular fiber-like assemblies on bacterial membranes. Induces cytokine and chemokine producation as well as TNF/TNFA and CSF2/GMCSF production in normal human keratinocytes. Exhibits hemolytic activity against red blood cells. Exhibits antimicrobial activity against E.coli and B.megaterium (in vitro). This Pan troglodytes (Chimpanzee) protein is Cathelicidin antimicrobial peptide.